Reading from the N-terminus, the 230-residue chain is ATP synthase subunit a (230 aa).

The next 5 helical transmembrane spans lie at 17 to 37 (LPIT…FIMA), 78 to 98 (IFPF…IGVI), 107 to 127 (DLSV…WFGI), 165 to 187 (LFGN…GFLV), and 198 to 218 (EAII…AGGI).

This sequence belongs to the ATPase A chain family. As to quaternary structure, F-type ATPases have 2 components, CF(1) - the catalytic core - and CF(0) - the membrane proton channel. CF(1) has five subunits: alpha(3), beta(3), gamma(1), delta(1), epsilon(1). CF(0) has three main subunits: a(1), b(2) and c(9-12). The alpha and beta chains form an alternating ring which encloses part of the gamma chain. CF(1) is attached to CF(0) by a central stalk formed by the gamma and epsilon chains, while a peripheral stalk is formed by the delta and b chains.

Its subcellular location is the cell inner membrane. Functionally, key component of the proton channel; it plays a direct role in the translocation of protons across the membrane. This Legionella pneumophila (strain Corby) protein is ATP synthase subunit a.